The following is a 253-amino-acid chain: NAD(P)H-quinone oxidoreductase subunit K (253 aa).

[4Fe-4S] cluster-binding residues include C68, C69, C133, and C164.

Belongs to the complex I 20 kDa subunit family. NDH-1 can be composed of about 15 different subunits; different subcomplexes with different compositions have been identified which probably have different functions. Requires [4Fe-4S] cluster as cofactor.

The protein localises to the cellular thylakoid membrane. The catalysed reaction is a plastoquinone + NADH + (n+1) H(+)(in) = a plastoquinol + NAD(+) + n H(+)(out). The enzyme catalyses a plastoquinone + NADPH + (n+1) H(+)(in) = a plastoquinol + NADP(+) + n H(+)(out). NDH-1 shuttles electrons from an unknown electron donor, via FMN and iron-sulfur (Fe-S) centers, to quinones in the respiratory and/or the photosynthetic chain. The immediate electron acceptor for the enzyme in this species is believed to be plastoquinone. Couples the redox reaction to proton translocation, and thus conserves the redox energy in a proton gradient. Cyanobacterial NDH-1 also plays a role in inorganic carbon-concentration. This is NAD(P)H-quinone oxidoreductase subunit K from Synechococcus sp. (strain CC9311).